Reading from the N-terminus, the 263-residue chain is Indolethylamine N-methyltransferase (263 aa).

Lys-13 is modified (N6-succinyllysine). S-adenosyl-L-methionine is bound by residues Tyr-20, Tyr-25, Gly-63, Tyr-69, 85-87 (DFT), and Asn-90. Lys-96 is modified (N6-succinyllysine). Residues 142–143 (DV) and Leu-163 each bind S-adenosyl-L-methionine.

It belongs to the class I-like SAM-binding methyltransferase superfamily. NNMT/PNMT/TEMT family. In terms of assembly, monomer. In terms of tissue distribution, widely expressed. The highest levels were in thyroid, adrenal gland, adult and fetal lung. Intermediate levels in heart, placenta, skeletal muscle, testis, small intestine, pancreas, stomach, spinal cord, lymph node and trachea. Very low levels in adult and fetal kidney and liver, in adult spleen, thymus, ovary, colon and bone marrow. Not expressed in peripheral blood leukocytes and brain.

The protein localises to the cytoplasm. It carries out the reaction a tertiary amine + S-adenosyl-L-methionine = a methylated tertiary amine + S-adenosyl-L-homocysteine + H(+). The enzyme catalyses a secondary amine + S-adenosyl-L-methionine = a methylated secondary amine + S-adenosyl-L-homocysteine + H(+). It catalyses the reaction a primary amine + S-adenosyl-L-methionine = a methylated primary amine + S-adenosyl-L-homocysteine + H(+). The catalysed reaction is dimethyl sulfide + S-adenosyl-L-methionine = trimethylsulfonium + S-adenosyl-L-homocysteine. Its function is as follows. Functions as a thioether S-methyltransferase and is active with a variety of thioethers and the corresponding selenium and tellurium compounds, including 3-methylthiopropionaldehyde, dimethyl selenide, dimethyl telluride, 2-methylthioethylamine, 2-methylthioethanol, methyl-n-propyl sulfide and diethyl sulfide. Plays an important role in the detoxification of selenium compounds. Catalyzes the N-methylation of tryptamine and structurally related compounds. The protein is Indolethylamine N-methyltransferase (INMT) of Homo sapiens (Human).